Consider the following 194-residue polypeptide: Holliday junction branch migration complex subunit RuvA (194 aa).

The domain I stretch occupies residues 1-64; the sequence is MIGRLRGILA…EDSVSLYGFL (64 aa). The segment at 65 to 140 is domain II; sequence REGERRLFRD…RAADFSSGAP (76 aa). Residues 140 to 144 form a flexible linker region; sequence PITGQ. Residues 145-194 form a domain III region; that stretch reads LGPDAVSEATVALQQLGYKPAEAARMARDAGAEGDEVATVIRKALQAALR.

Belongs to the RuvA family. In terms of assembly, homotetramer. Forms an RuvA(8)-RuvB(12)-Holliday junction (HJ) complex. HJ DNA is sandwiched between 2 RuvA tetramers; dsDNA enters through RuvA and exits via RuvB. An RuvB hexamer assembles on each DNA strand where it exits the tetramer. Each RuvB hexamer is contacted by two RuvA subunits (via domain III) on 2 adjacent RuvB subunits; this complex drives branch migration. In the full resolvosome a probable DNA-RuvA(4)-RuvB(12)-RuvC(2) complex forms which resolves the HJ.

The protein resides in the cytoplasm. Its function is as follows. The RuvA-RuvB-RuvC complex processes Holliday junction (HJ) DNA during genetic recombination and DNA repair, while the RuvA-RuvB complex plays an important role in the rescue of blocked DNA replication forks via replication fork reversal (RFR). RuvA specifically binds to HJ cruciform DNA, conferring on it an open structure. The RuvB hexamer acts as an ATP-dependent pump, pulling dsDNA into and through the RuvAB complex. HJ branch migration allows RuvC to scan DNA until it finds its consensus sequence, where it cleaves and resolves the cruciform DNA. This Xanthomonas axonopodis pv. citri (strain 306) protein is Holliday junction branch migration complex subunit RuvA.